Reading from the N-terminus, the 196-residue chain is Dimiconin (196 aa).

Residues 1-21 (MKTIIVVTIFGILTCAYPTDG) form the signal peptide. 2 N-linked (GlcNAc...) asparagine glycosylation sites follow: Asn-62 and Asn-187.

It belongs to the calycin superfamily. Triabin family. In terms of tissue distribution, salivary gland.

Its subcellular location is the secreted. Inhibits the intrinsic blood coagulation pathway by blocking the activation of host coagulation factor XII (F12) but not the enzymatic activity of activated F12. This chain is Dimiconin, found in Triatoma dimidiata (Kissing bug).